A 310-amino-acid chain; its full sequence is Alpha/beta hydrolase domain-containing protein 17A (310 aa).

The disordered stretch occupies residues Val38–Ala61. Residues Ser190, Asp255, and His284 each act as charge relay system in the active site. Ser307 carries the post-translational modification Phosphoserine.

This sequence belongs to the AB hydrolase superfamily. ABHD17 family. Post-translationally, palmitoylated on cysteine residues located in a cysteine cluster at the N-terminus which promotes membrane localization. Palmitoylation is required for post-synaptic localization and for depalmitoylating activity towards DLG4/PSD95.

It is found in the cell membrane. Its subcellular location is the endosome membrane. It localises to the cell projection. The protein resides in the dendritic spine. The protein localises to the postsynaptic density membrane. The catalysed reaction is S-hexadecanoyl-L-cysteinyl-[protein] + H2O = L-cysteinyl-[protein] + hexadecanoate + H(+). Hydrolyzes fatty acids from S-acylated cysteine residues in proteins. Has depalmitoylating activity towards NRAS. Has depalmitoylating activity towards DLG4/PSD95. May have depalmitoylating activity towars MAP6. This Mus musculus (Mouse) protein is Alpha/beta hydrolase domain-containing protein 17A.